Here is a 459-residue protein sequence, read N- to C-terminus: Chromosomal replication initiator protein DnaA (459 aa).

The segment at 1 to 74 (MQKIETFWYF…DEMAQGHFNE (74 aa)) is domain I, interacts with DnaA modulators. Positions 74–122 (EKIHFKLELKDPAEIKTATIKAPEPKSKEDKKPPTDKAHGTTARKTNPS) are domain II. The tract at residues 91-123 (ATIKAPEPKSKEDKKPPTDKAHGTTARKTNPSR) is disordered. The span at 96–112 (PEPKSKEDKKPPTDKAH) shows a compositional bias: basic and acidic residues. Residues 123–339 (RLNPAFTFDA…GALKRVLAYS (217 aa)) are domain III, AAA+ region. ATP is bound by residues Gly-167, Gly-169, Lys-170, and Thr-171. Positions 340–459 (RFTGHPISLD…YSTLIHILRG (120 aa)) are domain IV, binds dsDNA.

This sequence belongs to the DnaA family. In terms of assembly, oligomerizes as a right-handed, spiral filament on DNA at oriC.

Its subcellular location is the cytoplasm. Plays an essential role in the initiation and regulation of chromosomal replication. ATP-DnaA binds to the origin of replication (oriC) to initiate formation of the DNA replication initiation complex once per cell cycle. Binds the DnaA box (a 9 base pair repeat at the origin) and separates the double-stranded (ds)DNA. Forms a right-handed helical filament on oriC DNA; dsDNA binds to the exterior of the filament while single-stranded (ss)DNA is stabiized in the filament's interior. The ATP-DnaA-oriC complex binds and stabilizes one strand of the AT-rich DNA unwinding element (DUE), permitting loading of DNA polymerase. After initiation quickly degrades to an ADP-DnaA complex that is not apt for DNA replication. Binds acidic phospholipids. The sequence is that of Chromosomal replication initiator protein DnaA from Nitrosomonas eutropha (strain DSM 101675 / C91 / Nm57).